We begin with the raw amino-acid sequence, 671 residues long: Probable potassium transport system protein Kup 2 (671 aa).

12 helical membrane-spanning segments follow: residues Phe12 to Tyr32, Ile56 to Leu76, Trp99 to Pro119, Ile139 to Phe159, Ala172 to Leu192, Val218 to Ser238, Ser251 to Leu271, Leu296 to Gly316, Ile345 to Phe365, Ala374 to Leu394, Pro400 to Ile420, and Gly429 to Tyr449.

It belongs to the HAK/KUP transporter (TC 2.A.72) family.

It is found in the cell membrane. It catalyses the reaction K(+)(in) + H(+)(in) = K(+)(out) + H(+)(out). Its function is as follows. Transport of potassium into the cell. Likely operates as a K(+):H(+) symporter. This chain is Probable potassium transport system protein Kup 2, found in Lactobacillus acidophilus (strain ATCC 700396 / NCK56 / N2 / NCFM).